Consider the following 212-residue polypeptide: Thymidylate kinase (212 aa).

10-17 (GPDGAGKT) is an ATP binding site.

The protein belongs to the thymidylate kinase family.

It carries out the reaction dTMP + ATP = dTDP + ADP. Phosphorylation of dTMP to form dTDP in both de novo and salvage pathways of dTTP synthesis. The polypeptide is Thymidylate kinase (Exiguobacterium sibiricum (strain DSM 17290 / CCUG 55495 / CIP 109462 / JCM 13490 / 255-15)).